A 252-amino-acid chain; its full sequence is Membrane protein insertase YidC (252 aa).

The signal sequence occupies residues Met-1–Gly-20. Cys-21 is lipidated: N-palmitoyl cysteine. Residue Cys-21 is the site of S-diacylglycerol cysteine attachment. 5 helical membrane passes run Tyr-59 to Val-79, Leu-129 to Ile-149, Phe-160 to Thr-180, Ile-206 to Leu-226, and Leu-228 to Met-248.

It belongs to the OXA1/ALB3/YidC family. Type 2 subfamily.

Its subcellular location is the cell membrane. Functionally, required for the insertion and/or proper folding and/or complex formation of integral membrane proteins into the membrane. Involved in integration of membrane proteins that insert both dependently and independently of the Sec translocase complex, as well as at least some lipoproteins. This Oceanobacillus iheyensis (strain DSM 14371 / CIP 107618 / JCM 11309 / KCTC 3954 / HTE831) protein is Membrane protein insertase YidC.